The primary structure comprises 104 residues: DNA-directed RNA polymerase subunit omega (104 aa).

This sequence belongs to the RNA polymerase subunit omega family. The RNAP catalytic core consists of 2 alpha, 1 beta, 1 beta' and 1 omega subunit. When a sigma factor is associated with the core the holoenzyme is formed, which can initiate transcription.

It catalyses the reaction RNA(n) + a ribonucleoside 5'-triphosphate = RNA(n+1) + diphosphate. Functionally, promotes RNA polymerase assembly. Latches the N- and C-terminal regions of the beta' subunit thereby facilitating its interaction with the beta and alpha subunits. The sequence is that of DNA-directed RNA polymerase subunit omega from Streptococcus thermophilus (strain CNRZ 1066).